Consider the following 441-residue polypeptide: Chitinase-like protein Idgf3 (441 aa).

Positions 1–23 (MTGSLWLSLALSLAVLAQFKVSA) are cleaved as a signal peptide. Positions 25-441 (PNLVCFYDSQ…MLRAIKYRLL (417 aa)) constitute a GH18 domain. Cysteines 29 and 56 form a disulfide. Residue N221 is glycosylated (N-linked (GlcNAc...) asparagine). Residues 309–331 (SGDSGMPVVPSTQGPAPAGPQSK) form a disordered region. C342 and C425 are oxidised to a cystine.

It belongs to the glycosyl hydrolase 18 family. IDGF subfamily. Glycosylated.

It is found in the secreted. In terms of biological role, cooperates with insulin-like peptides to stimulate the proliferation, polarization and motility of imaginal disk cells. May act by stabilizing the binding of insulin-like peptides to its receptor through a simultaneous interaction with both molecules to form a multiprotein signaling complex. In Drosophila yakuba (Fruit fly), this protein is Chitinase-like protein Idgf3 (Idgf3).